The sequence spans 252 residues: uncharacterized protein (252 aa).

16 to 40 (LVTGASDGIGREAAMTYARYGATVI) provides a ligand contact to NADP(+). Serine 152 contacts substrate. The active-site Proton acceptor is tyrosine 165.

The protein belongs to the short-chain dehydrogenases/reductases (SDR) family.

This is an uncharacterized protein from Escherichia coli (strain K12).